The primary structure comprises 318 residues: tRNA methyltransferase 10 homolog B (318 aa).

The span at 1–10 shows a compositional bias: basic and acidic residues; sequence MDCKSEESAQ. The disordered stretch occupies residues 1–105; the sequence is MDCKSEESAQ…DPGNGTCPQH (105 aa). Residues 52–63 show a composition bias toward polar residues; sequence SPANSAVWSSKN. A compositionally biased stretch (basic residues) spans 64–83; that stretch reads MQRKQRHWERIVSSKKSKRK. Residues 72 to 93 adopt a coiled-coil conformation; that stretch reads ERIVSSKKSKRKQERERRKAKR. The segment covering 84-96 has biased composition (basic and acidic residues); the sequence is QERERRKAKRAED. In terms of domain architecture, SAM-dependent MTase TRM10-type spans 114–311; the sequence is TKEKLLEAKH…KGVSPGKGYV (198 aa).

The protein belongs to the class IV-like SAM-binding methyltransferase superfamily. TRM10 family.

It carries out the reaction guanosine(9) in tRNA + S-adenosyl-L-methionine = N(1)-methylguanosine(9) in tRNA + S-adenosyl-L-homocysteine + H(+). Its function is as follows. S-adenosyl-L-methionine-dependent guanine N(1)-methyltransferase that catalyzes the formation of N(1)-methylguanine at position 9 (m1G9) in tRNAs. Probably not able to catalyze formation of N(1)-methyladenine at position 9 (m1A9) in tRNAs. The protein is tRNA methyltransferase 10 homolog B (Trmt10b) of Mus musculus (Mouse).